We begin with the raw amino-acid sequence, 447 residues long: Probable 7-dehydrocholesterol reductase (447 aa).

8 consecutive transmembrane segments (helical) span residues 24–44 (LTTAAMFMFCPFIILVFYLIT), 71–91 (IPSFKINVLGACLLWIVFQLI), 102–124 (FVPHYVGGIKAGHITPAGNLVYY), 133–153 (IITHVLVIMSCYYGLFSPTII), 157–177 (WGSIFWSVNIIGYLITFLAYF), 244–264 (YVSNSMILVIILQLIYIVDFF), 281–301 (FGWMLAWGDTVWLPFGYTLQA), and 309–329 (IDLSTGFFNLVFVMGIIGYII). Residues K337, R341, I367, W372, and 379–380 (NY) each bind NADP(+). The helical transmembrane segment at 393–413 (ACGFSHFIPYFYCVYMTILLV) threads the bilayer. NADP(+)-binding positions include D419, 423-427 (CSRKY), and Y434.

Belongs to the ERG4/ERG24 family.

Its subcellular location is the membrane. The enzyme catalyses cholesterol + NADP(+) = 7-dehydrocholesterol + NADPH + H(+). Its pathway is steroid biosynthesis; cholesterol biosynthesis. Its function is as follows. Catalyzes the last step of the cholesterol synthesis pathway, which transforms cholesta-5,7-dien-3beta-ol (7-dehydrocholesterol,7-DHC) into cholesterol by reducing the C7-C8 double bond of its sterol core. The polypeptide is Probable 7-dehydrocholesterol reductase (DHCR7) (Acanthamoeba polyphaga (Amoeba)).